We begin with the raw amino-acid sequence, 125 residues long: Inner membrane protein YbjM (125 aa).

Residues 1–6 (MKHKQR) lie on the Cytoplasmic side of the membrane. Residues 7-27 (WAGAICCFVLFIVVCLFLATH) form a helical membrane-spanning segment. At 28–34 (MKGAFRA) the chain is on the periplasmic side. The helical transmembrane segment at 35 to 55 (AGHPEIGLLFFILPGAVASFF) threads the bilayer. Residues 56–64 (SQRREVLKP) are Cytoplasmic-facing. A helical membrane pass occupies residues 65-85 (LFGAMLAAPCSMLIMRLFFSP). At 86–92 (TRSFWQE) the chain is on the periplasmic side. The helical transmembrane segment at 93 to 113 (LAWLLSAVFWCALGALCFLFI) threads the bilayer. The Cytoplasmic portion of the chain corresponds to 114–125 (SSLFKPQHRKNQ).

It is found in the cell inner membrane. In Escherichia coli O157:H7, this protein is Inner membrane protein YbjM (ybjM).